Reading from the N-terminus, the 318-residue chain is Carnitine monooxygenase reductase subunit (318 aa).

In terms of domain architecture, FAD-binding FR-type spans 5-107 (YEMFPAVVTR…SEPKNLFPLA (103 aa)). The region spanning 233–318 (FTVVLAKSNQ…AKGKKLVLDL (86 aa)) is the 2Fe-2S ferredoxin-type domain. 4 residues coordinate [2Fe-2S] cluster: Cys-267, Cys-272, Cys-275, and Cys-305.

Belongs to the PDR/VanB family. CntB subfamily. In terms of assembly, composed of an oxygenase subunit (cntA) and a reductase subunit (cntB). The cofactor is FMN. Requires [2Fe-2S] cluster as cofactor.

It carries out the reaction (R)-carnitine + NADH + O2 + H(+) = (3R)-3-hydroxy-4-oxobutanoate + trimethylamine + NAD(+) + H2O. The catalysed reaction is (R)-carnitine + NADPH + O2 + H(+) = (3R)-3-hydroxy-4-oxobutanoate + trimethylamine + NADP(+) + H2O. Its pathway is amine and polyamine metabolism; carnitine metabolism. Converts carnitine to trimethylamine and malic semialdehyde. The polypeptide is Carnitine monooxygenase reductase subunit (Acinetobacter baumannii (strain ATCC 19606 / DSM 30007 / JCM 6841 / CCUG 19606 / CIP 70.34 / NBRC 109757 / NCIMB 12457 / NCTC 12156 / 81)).